The following is a 97-amino-acid chain: Putative membrane protein insertion efficiency factor (97 aa).

This sequence belongs to the UPF0161 family.

It localises to the cell membrane. Functionally, could be involved in insertion of integral membrane proteins into the membrane. This chain is Putative membrane protein insertion efficiency factor, found in Lactobacillus gasseri (strain ATCC 33323 / DSM 20243 / BCRC 14619 / CIP 102991 / JCM 1131 / KCTC 3163 / NCIMB 11718 / NCTC 13722 / AM63).